The chain runs to 176 residues: NAD(P)H-quinone oxidoreductase subunit 6, chloroplastic (176 aa).

The next 5 membrane-spanning stretches (helical) occupy residues 10-30 (ILMLFGGFVLLLGGLGVVLLT), 33-53 (IYSAFSLGLVLVCISLFYFLL), 60-80 (VAQLLIYVGAINVLIIFAVMF), 95-115 (IGDGFTSLVCITIVFSLMTTI), and 152-172 (FYLPFELISIILLVSLIGAIT).

This sequence belongs to the complex I subunit 6 family. NDH is composed of at least 16 different subunits, 5 of which are encoded in the nucleus.

Its subcellular location is the plastid. The protein resides in the chloroplast thylakoid membrane. It catalyses the reaction a plastoquinone + NADH + (n+1) H(+)(in) = a plastoquinol + NAD(+) + n H(+)(out). The enzyme catalyses a plastoquinone + NADPH + (n+1) H(+)(in) = a plastoquinol + NADP(+) + n H(+)(out). In terms of biological role, NDH shuttles electrons from NAD(P)H:plastoquinone, via FMN and iron-sulfur (Fe-S) centers, to quinones in the photosynthetic chain and possibly in a chloroplast respiratory chain. The immediate electron acceptor for the enzyme in this species is believed to be plastoquinone. Couples the redox reaction to proton translocation, and thus conserves the redox energy in a proton gradient. The sequence is that of NAD(P)H-quinone oxidoreductase subunit 6, chloroplastic (ndhG) from Triticum aestivum (Wheat).